Reading from the N-terminus, the 541-residue chain is Plasminogen-binding protein PgbB (541 aa).

2 stretches are compositionally biased toward basic and acidic residues: residues 420–434 (HKAKENKQPLEENKV) and 446–455 (VKTRRPEPTK). A disordered region spans residues 420–541 (HKAKENKQPL…RRKALEMNKK (122 aa)). The segment covering 456 to 476 (DQNNAIQQGETKNNESKNTPI) has biased composition (polar residues). Residues 480 to 541 (NAAKKEAPKP…RRKALEMNKK (62 aa)) are compositionally biased toward basic and acidic residues.

The protein localises to the cell surface. In terms of biological role, binds plasminogen, specifically, and in a concentration and lysine-dependent manner. Plasminogen is the precursor of plasmin, a serine protease that cleaves fibrin, fibronectin, laminin and vitronectin. Acquisition of plasminogen/plasmin could enable H.pylori to degrade host components. This chain is Plasminogen-binding protein PgbB (pgbB), found in Helicobacter pylori (strain J99 / ATCC 700824) (Campylobacter pylori J99).